Reading from the N-terminus, the 305-residue chain is Methionyl-tRNA formyltransferase (305 aa).

111–114 (SLLP) contacts (6S)-5,6,7,8-tetrahydrofolate.

It belongs to the Fmt family.

The catalysed reaction is L-methionyl-tRNA(fMet) + (6R)-10-formyltetrahydrofolate = N-formyl-L-methionyl-tRNA(fMet) + (6S)-5,6,7,8-tetrahydrofolate + H(+). Attaches a formyl group to the free amino group of methionyl-tRNA(fMet). The formyl group appears to play a dual role in the initiator identity of N-formylmethionyl-tRNA by promoting its recognition by IF2 and preventing the misappropriation of this tRNA by the elongation apparatus. The chain is Methionyl-tRNA formyltransferase from Campylobacter jejuni subsp. doylei (strain ATCC BAA-1458 / RM4099 / 269.97).